A 691-amino-acid chain; its full sequence is Elongation factor G (691 aa).

The tr-type G domain maps to 8–283; it reads KKVRNIGIAA…AVVAYLPAPD (276 aa). Residues 17-24, 81-85, and 135-138 each bind GTP; these read AHIDAGKT, DTPGH, and NKMD.

Belongs to the TRAFAC class translation factor GTPase superfamily. Classic translation factor GTPase family. EF-G/EF-2 subfamily.

It localises to the cytoplasm. Its function is as follows. Catalyzes the GTP-dependent ribosomal translocation step during translation elongation. During this step, the ribosome changes from the pre-translocational (PRE) to the post-translocational (POST) state as the newly formed A-site-bound peptidyl-tRNA and P-site-bound deacylated tRNA move to the P and E sites, respectively. Catalyzes the coordinated movement of the two tRNA molecules, the mRNA and conformational changes in the ribosome. The chain is Elongation factor G from Campylobacter jejuni subsp. jejuni serotype O:6 (strain 81116 / NCTC 11828).